The following is a 130-amino-acid chain: Small ribosomal subunit protein uS9 (130 aa).

The protein belongs to the universal ribosomal protein uS9 family.

The protein is Small ribosomal subunit protein uS9 of Mycoplasmoides gallisepticum (strain R(low / passage 15 / clone 2)) (Mycoplasma gallisepticum).